A 63-amino-acid polypeptide reads, in one-letter code: Ct-IT2 (63 aa).

An LCN-type CS-alpha/beta domain is found at 1 to 63; sequence KDGYPMDSKG…VWDKATNKCG (63 aa). Disulfide bonds link C11/C62, C15/C36, C22/C43, and C26/C45. G63 carries the glycine amide modification.

As to expression, expressed by the venom gland.

Its subcellular location is the secreted. Its function is as follows. Beta toxins bind voltage-independently at site-4 of sodium channels (Nav) and shift the voltage of activation toward more negative potentials thereby affecting sodium channel activation and promoting spontaneous and repetitive firing. Is highly active on insects, since it provokes paralysis and death when injected into crickets. The chain is Ct-IT2 from Centruroides tecomanus (Scorpion).